The following is a 40-amino-acid chain: Dolichyl-diphosphooligosaccharide--protein glycosyltransferase subunit 4 (40 aa).

The Lumenal segment spans residues 1-7; the sequence is MITDMQL. The chain crosses the membrane as a helical span at residues 8-28; the sequence is AIFSNVLGVFLFLLVVAYHYI. Over 29–40 the chain is Cytoplasmic; the sequence is NANTGKPSAKAK.

The protein belongs to the OST4 family. Component of the oligosaccharyltransferase (OST) complex.

It is found in the endoplasmic reticulum membrane. Functionally, subunit of the oligosaccharyl transferase (OST) complex that catalyzes the initial transfer of a defined glycan (Glc(3)Man(9)GlcNAc(2) in eukaryotes) from the lipid carrier dolichol-pyrophosphate to an asparagine residue within an Asn-X-Ser/Thr consensus motif in nascent polypeptide chains, the first step in protein N-glycosylation. N-glycosylation occurs cotranslationally and the complex associates with the Sec61 complex at the channel-forming translocon complex that mediates protein translocation across the endoplasmic reticulum (ER). All subunits are required for a maximal enzyme activity. The polypeptide is Dolichyl-diphosphooligosaccharide--protein glycosyltransferase subunit 4 (Drosophila sechellia (Fruit fly)).